The sequence spans 294 residues: NAD kinase (294 aa).

The active-site Proton acceptor is the D74. NAD(+) contacts are provided by residues 74–75 (DG), 148–149 (NE), H159, R176, D178, 189–194 (TAYSLS), and Q249.

It belongs to the NAD kinase family. It depends on a divalent metal cation as a cofactor.

The protein localises to the cytoplasm. The catalysed reaction is NAD(+) + ATP = ADP + NADP(+) + H(+). In terms of biological role, involved in the regulation of the intracellular balance of NAD and NADP, and is a key enzyme in the biosynthesis of NADP. Catalyzes specifically the phosphorylation on 2'-hydroxyl of the adenosine moiety of NAD to yield NADP. This is NAD kinase from Vibrio parahaemolyticus serotype O3:K6 (strain RIMD 2210633).